We begin with the raw amino-acid sequence, 393 residues long: Chorismate synthase (393 aa).

NADP(+) contacts are provided by Arg40 and Arg46. Residues 129–131, 251–252, Gly301, 316–320, and Arg342 contribute to the FMN site; these read RAS, QA, and KPIST.

It belongs to the chorismate synthase family. Homotetramer. Requires FMNH2 as cofactor.

It carries out the reaction 5-O-(1-carboxyvinyl)-3-phosphoshikimate = chorismate + phosphate. The protein operates within metabolic intermediate biosynthesis; chorismate biosynthesis; chorismate from D-erythrose 4-phosphate and phosphoenolpyruvate: step 7/7. Its function is as follows. Catalyzes the anti-1,4-elimination of the C-3 phosphate and the C-6 proR hydrogen from 5-enolpyruvylshikimate-3-phosphate (EPSP) to yield chorismate, which is the branch point compound that serves as the starting substrate for the three terminal pathways of aromatic amino acid biosynthesis. This reaction introduces a second double bond into the aromatic ring system. This is Chorismate synthase from Koribacter versatilis (strain Ellin345).